Here is a 250-residue protein sequence, read N- to C-terminus: Eukaryotic translation initiation factor 3 subunit K (250 aa).

A PCI domain is found at 46–229; the sequence is FDCYANLALL…KENEARSEVK (184 aa).

This sequence belongs to the eIF-3 subunit K family. Component of the eukaryotic translation initiation factor 3 (eIF-3) complex.

Its subcellular location is the cytoplasm. In terms of biological role, component of the eukaryotic translation initiation factor 3 (eIF-3) complex, which is involved in protein synthesis of a specialized repertoire of mRNAs and, together with other initiation factors, stimulates binding of mRNA and methionyl-tRNAi to the 40S ribosome. The eIF-3 complex specifically targets and initiates translation of a subset of mRNAs involved in cell proliferation. The protein is Eukaryotic translation initiation factor 3 subunit K of Emericella nidulans (strain FGSC A4 / ATCC 38163 / CBS 112.46 / NRRL 194 / M139) (Aspergillus nidulans).